Reading from the N-terminus, the 433-residue chain is MSDVLFIEGGRVIDPAGGVDGVRTVVIRDGKVAEVAERVERPRDARVLDARNRWVTPGFVDLHVHLREPGQEYKETVATGARAAVAGGFTAVCAMPNTKPVNDCAAVTELVLARAAAAGLARVYPVGAISKGSGGEELAEYGELKASGCVALSDDGRPVMSSALMRRALEYARAFGLPLTVHEEDLHLVGKGVMHEGAAATRLGLKGIPSQAEDVMVLRDIALVELTGGRLHVAHVSTAGAVRAIREAKRRGLPVTGEVTPHHLALTDDDVAASGYSTDFKMNPPLRSADDVRACREGLADGTLDAIATDHAPHSAVEKDVEFDAAANGIVGLETAFSVCLGLVREGALTERRLVEALTAGPARVFGLPAGTLARGAAADVAVLDAAAEWTLDPARLQSKGRNTPWKGRRLAGRCTHTIVGGRIVHEEGKADR.

Residues histidine 63 and histidine 65 each contribute to the Zn(2+) site. Residues 65 to 67 and asparagine 97 each bind substrate; that span reads HLR. 3 residues coordinate Zn(2+): aspartate 155, histidine 182, and histidine 235. A substrate-binding site is contributed by asparagine 283. Aspartate 310 provides a ligand contact to Zn(2+). Aspartate 310 is a catalytic residue. Residue histidine 314 participates in substrate binding.

The protein belongs to the metallo-dependent hydrolases superfamily. DHOase family. Class I DHOase subfamily. Zn(2+) is required as a cofactor.

It carries out the reaction (S)-dihydroorotate + H2O = N-carbamoyl-L-aspartate + H(+). The protein operates within pyrimidine metabolism; UMP biosynthesis via de novo pathway; (S)-dihydroorotate from bicarbonate: step 3/3. Its function is as follows. Catalyzes the reversible cyclization of carbamoyl aspartate to dihydroorotate. The polypeptide is Dihydroorotase (Anaeromyxobacter dehalogenans (strain 2CP-C)).